Here is a 198-residue protein sequence, read N- to C-terminus: Transcriptional regulator GfcR (198 aa).

This sequence belongs to the purine/pyrimidine phosphoribosyltransferase family. GfcR subfamily.

This is Transcriptional regulator GfcR from Methanosphaera stadtmanae (strain ATCC 43021 / DSM 3091 / JCM 11832 / MCB-3).